Consider the following 628-residue polypeptide: Methionine--tRNA ligase (628 aa).

A 'HIGH' region motif is present at residues 9-19 (YYVNDVPHLGH). Zn(2+)-binding residues include Cys-124, Cys-127, Cys-142, and Cys-145. The 'KMSKS' region motif lies at 294–298 (KMSKS). Residue Lys-297 participates in ATP binding. The region spanning 527–628 (DFAKIEIKVA…QLVQNGSLVG (102 aa)) is the tRNA-binding domain.

Belongs to the class-I aminoacyl-tRNA synthetase family. MetG type 2A subfamily. In terms of assembly, homodimer. Requires Zn(2+) as cofactor.

The protein resides in the cytoplasm. The catalysed reaction is tRNA(Met) + L-methionine + ATP = L-methionyl-tRNA(Met) + AMP + diphosphate. In terms of biological role, is required not only for elongation of protein synthesis but also for the initiation of all mRNA translation through initiator tRNA(fMet) aminoacylation. In Campylobacter jejuni subsp. jejuni serotype O:2 (strain ATCC 700819 / NCTC 11168), this protein is Methionine--tRNA ligase (metG).